A 360-amino-acid polypeptide reads, in one-letter code: UDP-3-O-acylglucosamine N-acyltransferase (360 aa).

The active-site Proton acceptor is H253.

This sequence belongs to the transferase hexapeptide repeat family. LpxD subfamily. As to quaternary structure, homotrimer.

It carries out the reaction a UDP-3-O-[(3R)-3-hydroxyacyl]-alpha-D-glucosamine + a (3R)-hydroxyacyl-[ACP] = a UDP-2-N,3-O-bis[(3R)-3-hydroxyacyl]-alpha-D-glucosamine + holo-[ACP] + H(+). It participates in bacterial outer membrane biogenesis; LPS lipid A biosynthesis. Its function is as follows. Catalyzes the N-acylation of UDP-3-O-acylglucosamine using 3-hydroxyacyl-ACP as the acyl donor. Is involved in the biosynthesis of lipid A, a phosphorylated glycolipid that anchors the lipopolysaccharide to the outer membrane of the cell. In Burkholderia multivorans (strain ATCC 17616 / 249), this protein is UDP-3-O-acylglucosamine N-acyltransferase.